Reading from the N-terminus, the 273-residue chain is Putative pyruvate, phosphate dikinase regulatory protein (273 aa).

An ADP-binding site is contributed by 153 to 160; the sequence is GVSRTSKT.

The protein belongs to the pyruvate, phosphate/water dikinase regulatory protein family. PDRP subfamily.

The catalysed reaction is N(tele)-phospho-L-histidyl/L-threonyl-[pyruvate, phosphate dikinase] + ADP = N(tele)-phospho-L-histidyl/O-phospho-L-threonyl-[pyruvate, phosphate dikinase] + AMP + H(+). It carries out the reaction N(tele)-phospho-L-histidyl/O-phospho-L-threonyl-[pyruvate, phosphate dikinase] + phosphate + H(+) = N(tele)-phospho-L-histidyl/L-threonyl-[pyruvate, phosphate dikinase] + diphosphate. Its function is as follows. Bifunctional serine/threonine kinase and phosphorylase involved in the regulation of the pyruvate, phosphate dikinase (PPDK) by catalyzing its phosphorylation/dephosphorylation. This is Putative pyruvate, phosphate dikinase regulatory protein from Rhizobium meliloti (strain 1021) (Ensifer meliloti).